We begin with the raw amino-acid sequence, 299 residues long: 4-diphosphocytidyl-2-C-methyl-D-erythritol kinase (299 aa).

K16 is an active-site residue. Residue P101–A111 participates in ATP binding. Residue D143 is part of the active site.

Belongs to the GHMP kinase family. IspE subfamily.

It carries out the reaction 4-CDP-2-C-methyl-D-erythritol + ATP = 4-CDP-2-C-methyl-D-erythritol 2-phosphate + ADP + H(+). The protein operates within isoprenoid biosynthesis; isopentenyl diphosphate biosynthesis via DXP pathway; isopentenyl diphosphate from 1-deoxy-D-xylulose 5-phosphate: step 3/6. Its function is as follows. Catalyzes the phosphorylation of the position 2 hydroxy group of 4-diphosphocytidyl-2C-methyl-D-erythritol. This is 4-diphosphocytidyl-2-C-methyl-D-erythritol kinase from Rhodopseudomonas palustris (strain ATCC BAA-98 / CGA009).